Here is a 1122-residue protein sequence, read N- to C-terminus: MNVDNVNKGTHTRSKASRVIPSDLIEQEVSLESCPLSRKRKLQESEQENPLSKRKSHPLKLALDEGFNVDSNGSEETEMKERDSGTEESEATLEEIEEDSEPTKPKEAPSPQTAEAESSDKVEPEETETKTESSPPAKATYSSYHEIIANSLLNLGQVAKEALVSEGHLKESELNNEKPTSVKSGQAEIEQLMVEEACEKEIIIQTEDAEEVIEVTSEPISESGTEPRDEVNCEDTEKLQKDMIDEEEEEEDDDVDEEDDDDLEEDEEEEEEHSSEMANQDLPHASQDSPKPHCEGHFSPKPEYSVIVEVRSDDDKDDDSHSQKSAVTDESEMYDMMTRGNLGLLEQAIALKAEQVKVVREPSRSSLDNMKNFSADEKQNRPIDTMRKSFYDAGRPEKRDIKCPTPGCDGTGHVTGLYPHHRSLSGCPHKDRIPPEILAMHENVLKCPTPGCTGQGHVNSNRNTHRSLSGCPIAAAEKLTRSHEKQQQPGDLSKSSSNSDRILRPMCFVKQLEIPQYGSYRPNMAPATPRANLAKELEKYSKVTFDYASFDAQVFGKRLLAPKIPSSETSPKAFKSKPFPKASSPCHSPSSSYIKSTSSSSSSGFDYTHDAEAAHMAATAILNLSTRCWEMPENLSTKQQDTPSKSSEIEVDENGTLDLSMNKHRKRESTFPSSSSCSSSPSMKSPDQSQRQNCTSATSSNMTSPHSSQTSRQDDWDGPIDYTKPNRQREEEPEEMEPAAASFASSEVDEQEMQEMQEMQEMQEESYEDRKYPGDVTLTNFKLKFLSKDSKKELLSCPTPGCDGSGHITGNYASHRSLSGCPLADKSLRNLMAAHSADLKCPTPGCDGSGHITGNYASHRSLSGCPRAKKSGLKITPTKDDKDDPDLMKCPVPGCDGLGHISGKYASHRSASGCPLAARRQKEGALNGSAFSWKSLKTEGPSCPTPGCDGSGHANGSFLTHRSLSGCPRASFAGKKGKISGDELLGTNFKTSDVLENDEEIKQLNKEINELNESNSEMEADMVNLQSQITTMEKNLKNIEEENKVIEEQNEALFVELSGLSQALIRSLTNIRLPQMEPISEQNFDAYVNTLTDMYTNQECYQNPENKALLESIKQAVKGIKV.

Disordered regions lie at residues 1 to 139 (MNVD…PAKA) and 208 to 334 (DAEE…SEMY). Residues 86 to 100 (TEESEATLEEIEEDS) are compositionally biased toward acidic residues. 2 stretches are compositionally biased toward basic and acidic residues: residues 118 to 131 (SSDK…ETKT) and 225 to 243 (TEPR…QKDM). Residues 244 to 273 (IDEEEEEEDDDVDEEDDDDLEEDEEEEEEH) show a composition bias toward acidic residues. Composition is skewed to basic and acidic residues over residues 290 to 300 (PKPHCEGHFSP) and 310 to 322 (VRSD…DSHS). 2 CCHHC-type zinc fingers span residues 394 to 437 (GRPE…PPEI) and 438 to 481 (LAMH…KLTR). C403, C408, H421, C427, C447, C452, H465, and C471 together coordinate Zn(2+). Disordered stretches follow at residues 479 to 499 (LTRS…SSNS), 566 to 595 (SSET…SYIK), and 634 to 770 (NLST…YEDR). Residues 487-499 (QQPGDLSKSSSNS) are compositionally biased toward polar residues. Positions 570 to 595 (SPKAFKSKPFPKASSPCHSPSSSYIK) are enriched in low complexity. The segment covering 634-646 (NLSTKQQDTPSKS) has biased composition (polar residues). The segment covering 670-689 (TFPSSSSCSSSPSMKSPDQS) has biased composition (low complexity). Residues 690–711 (QRQNCTSATSSNMTSPHSSQTS) show a composition bias toward polar residues. CCHHC-type zinc fingers lie at residues 788-831 (KDSK…LRNL), 832-875 (MAAH…GLKI), 881-924 (DKDD…QKEG), and 934-977 (KSLK…GKKG). Residues C797, C802, H815, C821, C841, C846, H859, C865, C890, C895, H908, C914, C943, C948, H961, and C967 each contribute to the Zn(2+) site.

Belongs to the MYT1 family.

The protein resides in the nucleus. Its function is as follows. Transcriptional activator which is essential for neuronal differentiation. Can promote ectotopic neuronal differentiation and confers insensitivity to lateral inhibition, but only in cooperation with bHLH transcription factors. The sequence is that of Myelin transcription factor 1 (myt1) from Xenopus laevis (African clawed frog).